The following is a 161-amino-acid chain: Allophycocyanin subunit alpha-B (161 aa).

The residue at position 71 (asparagine 71) is an N4-methylasparagine. Cysteine 81 is a (2R,3E)-phycocyanobilin binding site.

This sequence belongs to the phycobiliprotein family. As to quaternary structure, heterohexamer of two alpha chains, one alpha-B chain and three beta chains. In terms of processing, contains one covalently linked bilin chromophore.

Its subcellular location is the cellular thylakoid membrane. Its function is as follows. Light-harvesting photosynthetic bile pigment-protein from the phycobiliprotein complex. Allophycocyanin has a maximum absorption at approximately 654 nanometers. The sequence is that of Allophycocyanin subunit alpha-B (apcD) from Synechocystis sp. (strain ATCC 27184 / PCC 6803 / Kazusa).